Reading from the N-terminus, the 191-residue chain is Adenine phosphoribosyltransferase (191 aa).

It belongs to the purine/pyrimidine phosphoribosyltransferase family. Homodimer.

Its subcellular location is the cytoplasm. The enzyme catalyses AMP + diphosphate = 5-phospho-alpha-D-ribose 1-diphosphate + adenine. The protein operates within purine metabolism; AMP biosynthesis via salvage pathway; AMP from adenine: step 1/1. Catalyzes a salvage reaction resulting in the formation of AMP, that is energically less costly than de novo synthesis. This is Adenine phosphoribosyltransferase from Clavibacter sepedonicus (Clavibacter michiganensis subsp. sepedonicus).